A 513-amino-acid chain; its full sequence is Coiled-coil domain-containing protein 102B (513 aa).

The segment at 1–217 is required for centriolar localization and for interaction with CEP250, CROCC, LRRC45 and NEK2; it reads MNLDSIHRLI…IDSLKLSEEM (217 aa). S21, S22, S34, S135, S142, S194, and S210 each carry phosphoserine. Residues 72-142 are a coiled coil; it reads ELRLRELEEV…ELSTLKKKQS (71 aa). Coiled coils occupy residues 268–337 and 363–513; these read QKIL…ESKS and WDKR…LQNW. A phosphoserine mark is found at S401, S404, and S406. The tract at residues 493 to 513 is disordered; it reads LDEEKERNENLETELRHLQNW.

In terms of assembly, interacts (via N-terminus) with centriolar protein CEP250/CNAP1; the interaction results in recruitment of CCDC102B to the proximal ends of centrioles. Interacts (via N-terminus) with CROCC/rootletin and LRRC45. Interacts (via N-terminus) with serine/threonine-protein kinase NEK2; the interaction results in phosphorylation of CCDC102B. Post-translationally, phosphorylated directly or indirectly by NEK2 during mitosis which causes dissociation of CCDC102B from the centrosome and allows for centrosome separation.

The protein localises to the cytoplasm. It is found in the cytoskeleton. The protein resides in the microtubule organizing center. Its subcellular location is the centrosome. It localises to the centriole. During interphase, forms fibers at the proximal ends of centrioles to maintain centrosome cohesion. During mitosis, dissociates from the centrosome following phosphorylation to allow centrosome separation. Contributes to CROCC/rootletin filament formation. The polypeptide is Coiled-coil domain-containing protein 102B (CCDC102B) (Homo sapiens (Human)).